The sequence spans 40 residues: Natriuretic peptide PpNP-a (40 aa).

Residues 1 to 8 constitute a propeptide that is removed on maturation; it reads SGSKTANI. The disordered stretch occupies residues 1 to 40; it reads SGSKTANIGDGCFGVPIDHIGSTSGMGCGSPRPKPTPGGS. Residues Cys-12 and Cys-28 are joined by a disulfide bond.

It belongs to the natriuretic peptide family. As to expression, expressed by the venom gland.

Its subcellular location is the secreted. Its function is as follows. Snake venom natriuretic peptide that targets both NPR1 and NPR2. Exhibits hypotensive and vasodepressor activities. The chain is Natriuretic peptide PpNP-a from Pseudechis porphyriacus (Red-bellied black snake).